The sequence spans 112 residues: Protein SMALL AUXIN UP-REGULATED RNA 10 (112 aa).

It belongs to the ARG7 family. As to expression, confined to the veins and petioles of rosette leaves and cauline leaves, and specifically expressed at the abaxial side of inflorescence branche; relocates to both the adaxial (Ad) and abaxial (Ab) sides of the branch in reduced red:far-red (R:FR) light, during shade. Also present in flowers.

The protein resides in the cell membrane. Functionally, provide a mechanistic link between auxin and plasma membrane H(+)-ATPases (PM H(+)-ATPases, e.g. AHA1 and AHA2), and triggers PM H(+)-ATPases activity by promoting phosphorylation of their C-terminal autoinhibitory domain as a result of PP2C-D subfamily of type 2C phosphatases inhibition, thus leading to the acidification of the apoplast and the facilitation of solutes and water uptake to drive cell expansion. Triggers plant growth probably by promoting cell elongation. Regulates branch angles and bending. The polypeptide is Protein SMALL AUXIN UP-REGULATED RNA 10 (Arabidopsis thaliana (Mouse-ear cress)).